Consider the following 472-residue polypeptide: Poly(A) polymerase catalytic subunit (472 aa).

Catalysis depends on residues Asp-194 and Asp-196.

It belongs to the poxviridae poly(A) polymerase catalytic subunit family. Heterodimer of a large (catalytic) subunit and a small (regulatory) subunit.

The catalysed reaction is RNA(n) + ATP = RNA(n)-3'-adenine ribonucleotide + diphosphate. Polymerase that creates the 3'-poly(A) tail of mRNA's. In Serinus (CNPV), this protein is Poly(A) polymerase catalytic subunit (PAPL).